A 152-amino-acid polypeptide reads, in one-letter code: Superoxide dismutase [Cu-Zn] (152 aa).

H45, H47, and H62 together coordinate Cu cation. Residues 61–87 (PHFNPAGKEHGAPEDENRHAGDLGNAT) are disordered. The Zn(2+) site is built by H62, H70, H79, and D82. Residues 67–81 (GKEHGAPEDENRHAG) show a composition bias toward basic and acidic residues. Residue H119 participates in Cu cation binding.

It belongs to the Cu-Zn superoxide dismutase family. In terms of assembly, homodimer. Cu cation serves as cofactor. Zn(2+) is required as a cofactor.

The protein localises to the cytoplasm. The enzyme catalyses 2 superoxide + 2 H(+) = H2O2 + O2. In terms of biological role, destroys radicals which are normally produced within the cells and which are toxic to biological systems. The protein is Superoxide dismutase [Cu-Zn] of Zingiber officinale (Ginger).